The chain runs to 393 residues: Formate-dependent phosphoribosylglycinamide formyltransferase (393 aa).

Residues 22–23 and glutamate 82 each bind N(1)-(5-phospho-beta-D-ribosyl)glycinamide; that span reads EL. ATP is bound by residues arginine 114, lysine 155, 160-165, 195-198, and glutamate 203; these read SSGKGQ and EGFV. Residues 119 to 308 enclose the ATP-grasp domain; the sequence is RLAAEELGLP…EFALHVRAFT (190 aa). Residues glutamate 267 and glutamate 279 each contribute to the Mg(2+) site. N(1)-(5-phospho-beta-D-ribosyl)glycinamide-binding positions include aspartate 286, lysine 356, and 363-364; that span reads RR.

Belongs to the PurK/PurT family. As to quaternary structure, homodimer.

It catalyses the reaction N(1)-(5-phospho-beta-D-ribosyl)glycinamide + formate + ATP = N(2)-formyl-N(1)-(5-phospho-beta-D-ribosyl)glycinamide + ADP + phosphate + H(+). It participates in purine metabolism; IMP biosynthesis via de novo pathway; N(2)-formyl-N(1)-(5-phospho-D-ribosyl)glycinamide from N(1)-(5-phospho-D-ribosyl)glycinamide (formate route): step 1/1. Involved in the de novo purine biosynthesis. Catalyzes the transfer of formate to 5-phospho-ribosyl-glycinamide (GAR), producing 5-phospho-ribosyl-N-formylglycinamide (FGAR). Formate is provided by PurU via hydrolysis of 10-formyl-tetrahydrofolate. This Vibrio cholerae serotype O1 (strain M66-2) protein is Formate-dependent phosphoribosylglycinamide formyltransferase.